The primary structure comprises 516 residues: Calcitonin receptor (516 aa).

Positions 1–24 (MRFLLLNRFTLLLLLLVSPTPVLQ) are cleaved as a signal peptide. Over 25 to 146 (APTNLTDSGL…FTPDKLHNAY (122 aa)) the chain is Extracellular. Residues Asn28, Asn73, Asn125, and Asn130 are each glycosylated (N-linked (GlcNAc...) asparagine). 3 disulfides stabilise this stretch: Cys55–Cys81, Cys72–Cys112, and Cys95–Cys134. The helical transmembrane segment at 147–169 (VLYYLALVGHSMSIAALIASMGI) threads the bilayer. The Cytoplasmic portion of the chain corresponds to 170-181 (FLFFKNLSCQRV). Residues 182–202 (TLHKNMFLTYILNSIIIIIHL) traverse the membrane as a helical segment. Topologically, residues 203 to 256 (VEVVPNGDLVRRDPMHIFHHNTYMWTMQWELSPPLPLSAHEGKMDPHDSEVISC) are extracellular. An intrachain disulfide couples Cys256 to Cys326. The helical transmembrane segment at 257–279 (KILHFFHQYMMACNYFWMLCEGI) threads the bilayer. Over 280–296 (YLHTLIVMAVFTEDQRL) the chain is Cytoplasmic. Residues 297–317 (RWYYLLGWGFPIVPTIIHAIT) traverse the membrane as a helical segment. Over 318–333 (RAVYYNDNCWLSTETH) the chain is Extracellular. A helical transmembrane segment spans residues 334–357 (LLYIIHGPVMAALVVNFFFLLNIV). The Cytoplasmic segment spans residues 358–377 (RVLVTKMRQTHEAEAYMYLK). Residues 378–396 (AVKATMVLVPLLGIQFVVF) form a helical membrane-spanning segment. The Extracellular portion of the chain corresponds to 397 to 404 (PWRPSNKV). Residues 405 to 431 (LGKIYDYLMHSLIHFQGFFVATIYCFC) form a helical membrane-spanning segment. The Cytoplasmic portion of the chain corresponds to 432–516 (NHEVQVTLKR…MNVIQQDSSA (85 aa)). The disordered stretch occupies residues 489-516 (RNPPVSNNEGEEGTEMIPMNVIQQDSSA).

It belongs to the G-protein coupled receptor 2 family. In terms of assembly, heterodimer of CALCR and RAMP1, RAMP2 or RAMP3; the receptor complexes function as AMYR1, AMYR2 and AMYR3 receptors, respectively, and respond to amylin/IAPP, calcitonin/CT and CGRP1 ligands. Interacts with GPRASP2.

The protein localises to the cell membrane. Functionally, g protein-coupled receptor activated by ligand peptides amylin (IAPP), calcitonin (CT/CALCA) and calcitonin gene-related peptide type 1 (CGRP1/CALCA). CALCR interacts with receptor-activity-modifying proteins RAMP1, 2 and 3 to form receptor complexes AMYR1, 2 and 3, respectively. IAPP, CT and CGRP1 activate CALCR and AMYRs with distinct modes of receptor activation resulting in specific phenotypes. Ligand binding causes a conformation change that triggers signaling via guanine nucleotide-binding proteins (G proteins) and modulates the activity of downstream effectors. Activates cAMP-dependent pathway. This chain is Calcitonin receptor, found in Rattus norvegicus (Rat).